A 131-amino-acid chain; its full sequence is NADH dehydrogenase [ubiquinone] 1 alpha subcomplex subunit 6 (131 aa).

Belongs to the complex I LYR family. As to quaternary structure, mammalian complex I is composed of 45 different subunits.

Its subcellular location is the mitochondrion inner membrane. In terms of biological role, accessory subunit of the mitochondrial membrane respiratory chain NADH dehydrogenase (Complex I), that is believed to be not involved in catalysis. Required for proper complex I assembly. Complex I functions in the transfer of electrons from NADH to the respiratory chain. The immediate electron acceptor for the enzyme is believed to be ubiquinone. This Mus musculus (Mouse) protein is NADH dehydrogenase [ubiquinone] 1 alpha subcomplex subunit 6.